Reading from the N-terminus, the 411-residue chain is MSLQAIKFDRQKTRLDILDQLLIPYQTKYIQVSNIDDGYSVIQKMQVRGAPAIAIVGSFSITCELNSVKDGQKNNHGYDVSDLSVFKAALEKRIDYLIKSRPTAVNLVNACTAIKAIVETACTIDDLYAEVLRYSVVLFEDDLKNNYRIGANGVRYIDNELSNFEGPFAVMTICNTGSLATSGHGTALGIIRSLWAKSKANPRNADDKTIQGQKSWLSHVYACETRPYNQGSRLTSYELNFEKIPFSLITDNMPAYLIDSLFSQRVNCPLPSRAPVKFIIVGADRIVTNGDLANKIGTFQLALIASQYDGVKFIGAAPTTTIDYTRDSGDDIVIEQRPANELTSILGGQVDSSDQFVTDSEGKVNLLRIKTATPNIDVWNPAFDVTPNRLIDSIVTEQDYLVKDSHGKFNL.

The active-site Proton donor is aspartate 284.

The protein belongs to the eIF-2B alpha/beta/delta subunits family. MtnA subfamily.

The protein localises to the cytoplasm. Its subcellular location is the nucleus. It carries out the reaction 5-(methylsulfanyl)-alpha-D-ribose 1-phosphate = 5-(methylsulfanyl)-D-ribulose 1-phosphate. It participates in amino-acid biosynthesis; L-methionine biosynthesis via salvage pathway; L-methionine from S-methyl-5-thio-alpha-D-ribose 1-phosphate: step 1/6. Catalyzes the interconversion of methylthioribose-1-phosphate (MTR-1-P) into methylthioribulose-1-phosphate (MTRu-1-P). The chain is Methylthioribose-1-phosphate isomerase from Komagataella phaffii (strain GS115 / ATCC 20864) (Yeast).